We begin with the raw amino-acid sequence, 99 residues long: MATSIEQQAKGKKDGEIRYLTPLNIETTKAKKYCRFKRSGIKYIDYKDPDFLMGFVNEQGKLLPRRLTGTSLKFQRKVATAVKRARHLALMPYVGDLLK.

The protein belongs to the bacterial ribosomal protein bS18 family. As to quaternary structure, part of the 30S ribosomal subunit. Forms a tight heterodimer with protein bS6.

Binds as a heterodimer with protein bS6 to the central domain of the 16S rRNA, where it helps stabilize the platform of the 30S subunit. This is Small ribosomal subunit protein bS18 from Christiangramia forsetii (strain DSM 17595 / CGMCC 1.15422 / KT0803) (Gramella forsetii).